The following is a 634-amino-acid chain: Chaperone protein HtpG (634 aa).

The segment at 1–344 (MNETVANNKE…SNDLPLNVSR (344 aa)) is a; substrate-binding. Residues 345–561 (EILQDNKVTQ…DFEMGTQMAK (217 aa)) form a b region. The segment at 562–634 (LLAAAGQAVP…TAINSLLTKG (73 aa)) is c.

It belongs to the heat shock protein 90 family. Homodimer.

It localises to the cytoplasm. Functionally, molecular chaperone. Has ATPase activity. The sequence is that of Chaperone protein HtpG from Vibrio vulnificus (strain CMCP6).